Reading from the N-terminus, the 258-residue chain is Transcription factor ORG3 (258 aa).

Residues Val76 to Leu128 form the bHLH domain.

As to quaternary structure, homodimer. Expressed in vascular tissues. Detected in roots.

The protein localises to the nucleus. The sequence is that of Transcription factor ORG3 (ORG3) from Arabidopsis thaliana (Mouse-ear cress).